We begin with the raw amino-acid sequence, 63 residues long: Large ribosomal subunit protein bL28 (63 aa).

This sequence belongs to the bacterial ribosomal protein bL28 family.

This chain is Large ribosomal subunit protein bL28, found in Hydrogenobaculum sp. (strain Y04AAS1).